The chain runs to 338 residues: Glyceraldehyde-3-phosphate dehydrogenase, cytosolic (338 aa).

NAD(+) is bound by residues 14-15 (RI), aspartate 36, and arginine 83. D-glyceraldehyde 3-phosphate is bound by residues 154 to 156 (SCT), threonine 185, 214 to 215 (TG), and arginine 237. Cysteine 155 serves as the catalytic Nucleophile. Position 319 (asparagine 319) interacts with NAD(+).

It belongs to the glyceraldehyde-3-phosphate dehydrogenase family. Homotetramer.

It localises to the cytoplasm. The catalysed reaction is D-glyceraldehyde 3-phosphate + phosphate + NAD(+) = (2R)-3-phospho-glyceroyl phosphate + NADH + H(+). Its pathway is carbohydrate degradation; glycolysis; pyruvate from D-glyceraldehyde 3-phosphate: step 1/5. Functionally, key enzyme in glycolysis that catalyzes the first step of the pathway by converting D-glyceraldehyde 3-phosphate (G3P) into 3-phospho-D-glyceroyl phosphate. Essential for the maintenance of cellular ATP levels and carbohydrate metabolism. In Pisum sativum (Garden pea), this protein is Glyceraldehyde-3-phosphate dehydrogenase, cytosolic (GAPC1).